Here is a 422-residue protein sequence, read N- to C-terminus: Biofilm regulator 1 (422 aa).

Composition is skewed to low complexity over residues 1 to 19 (MSSS…TTSA) and 36 to 45 (SGGSNNGNGS). Disordered stretches follow at residues 1 to 86 (MSSS…KCPP) and 116 to 207 (RLSS…PSHP). The span at 46–61 (ALKSQISPRLSDTSRI) shows a compositional bias: polar residues. Composition is skewed to low complexity over residues 69-81 (TSGS…SSTP) and 120-143 (PTLP…LSPV). The segment covering 146-159 (VINTPPQQPQSVSA) has biased composition (polar residues). The span at 160-194 (STSPNTQYQYYQYQQQSSPIQQQQQQQQATPAATP) shows a compositional bias: low complexity. Residues 195-205 (TVMQMAQNQPS) show a composition bias toward polar residues. Residues 282 to 307 (CHRCGTTETPEWRRGPKGVRTLCNAC) form a GATA-type zinc finger.

In terms of assembly, interacts with HDA1.

The protein localises to the nucleus. Transcription factor required for hyphal growth, biofilm formation, and virulence. Promotes formation of both conventional and pheromone-stimulated biofilms. Binds and recruits HDA1 to promoters of hypha-specific genes in a rapamycin-dependent manner. Involved in the switch between two heritable states, the white and opaque states. These two cell types differ in many characteristics, including cell structure, mating competence, and virulence. Each state is heritable for many generations, and switching between states occurs stochastically at low frequency. The polypeptide is Biofilm regulator 1 (BRG1) (Candida albicans (strain SC5314 / ATCC MYA-2876) (Yeast)).